A 205-amino-acid chain; its full sequence is Molybdenum cofactor guanylyltransferase (205 aa).

Residues 14-16 (LAG), K27, D77, and D107 contribute to the GTP site. D107 is a Mg(2+) binding site.

Belongs to the MobA family. Monomer. Mg(2+) is required as a cofactor.

The protein resides in the cytoplasm. It catalyses the reaction Mo-molybdopterin + GTP + H(+) = Mo-molybdopterin guanine dinucleotide + diphosphate. Its function is as follows. Transfers a GMP moiety from GTP to Mo-molybdopterin (Mo-MPT) cofactor (Moco or molybdenum cofactor) to form Mo-molybdopterin guanine dinucleotide (Mo-MGD) cofactor. The sequence is that of Molybdenum cofactor guanylyltransferase from Burkholderia ambifaria (strain ATCC BAA-244 / DSM 16087 / CCUG 44356 / LMG 19182 / AMMD) (Burkholderia cepacia (strain AMMD)).